A 155-amino-acid polypeptide reads, in one-letter code: MYKMQLVACIALSLVLITNSAPTSSSTKETQQQLEQLLLDLKMLSKMVNNKDLKLPRMLTFKFYMPKRVTELKHLQCLVEELKPLENVLNLAQSQMSQLEHNGDLISNINITVLELKGSETTFMCDYDDEAATIVEFLNKWIIFCQSIISKRLDN.

Positions 1 to 20 (MYKMQLVACIALSLVLITNS) are cleaved as a signal peptide. The O-linked (GalNAc...) threonine glycan is linked to threonine 23. Cysteines 77 and 125 form a disulfide.

The protein belongs to the IL-2 family.

It is found in the secreted. Cytokine produced by activated CD4-positive helper T-cells and to a lesser extend activated CD8-positive T-cells and natural killer (NK) cells that plays pivotal roles in the immune response and tolerance. Binds to a receptor complex composed of either the high-affinity trimeric IL-2R (IL2RA/CD25, IL2RB/CD122 and IL2RG/CD132) or the low-affinity dimeric IL-2R (IL2RB and IL2RG). Interaction with the receptor leads to oligomerization and conformation changes in the IL-2R subunits resulting in downstream signaling starting with phosphorylation of JAK1 and JAK3. In turn, JAK1 and JAK3 phosphorylate the receptor to form a docking site leading to the phosphorylation of several substrates including STAT5. This process leads to activation of several pathways including STAT, phosphoinositide-3-kinase/PI3K and mitogen-activated protein kinase/MAPK pathways. Functions as a T-cell growth factor and can increase NK-cell cytolytic activity as well. Promotes strong proliferation of activated B-cells and subsequently immunoglobulin production. Plays a pivotal role in regulating the adaptive immune system by controlling the survival and proliferation of regulatory T-cells, which are required for the maintenance of immune tolerance. Moreover, participates in the differentiation and homeostasis of effector T-cell subsets, including Th1, Th2, Th17 as well as memory CD8-positive T-cells. The sequence is that of Interleukin-2 (IL2) from Dasypus novemcinctus (Nine-banded armadillo).